The primary structure comprises 598 residues: Elongation factor 4 (598 aa).

The 182-residue stretch at 4–185 folds into the tr-type G domain; it reads KNIRNFSIIA…TIIAKIPPPK (182 aa). Residues 16–21 and 132–135 each bind GTP; these read DHGKST and NKID.

It belongs to the TRAFAC class translation factor GTPase superfamily. Classic translation factor GTPase family. LepA subfamily.

The protein resides in the cell membrane. It catalyses the reaction GTP + H2O = GDP + phosphate + H(+). Its function is as follows. Required for accurate and efficient protein synthesis under certain stress conditions. May act as a fidelity factor of the translation reaction, by catalyzing a one-codon backward translocation of tRNAs on improperly translocated ribosomes. Back-translocation proceeds from a post-translocation (POST) complex to a pre-translocation (PRE) complex, thus giving elongation factor G a second chance to translocate the tRNAs correctly. Binds to ribosomes in a GTP-dependent manner. The chain is Elongation factor 4 from Mycoplasma genitalium (strain ATCC 33530 / DSM 19775 / NCTC 10195 / G37) (Mycoplasmoides genitalium).